The sequence spans 95 residues: Pyrimidine/purine nucleoside phosphorylase (95 aa).

It belongs to the nucleoside phosphorylase PpnP family.

It catalyses the reaction a purine D-ribonucleoside + phosphate = a purine nucleobase + alpha-D-ribose 1-phosphate. It carries out the reaction adenosine + phosphate = alpha-D-ribose 1-phosphate + adenine. The enzyme catalyses cytidine + phosphate = cytosine + alpha-D-ribose 1-phosphate. The catalysed reaction is guanosine + phosphate = alpha-D-ribose 1-phosphate + guanine. It catalyses the reaction inosine + phosphate = alpha-D-ribose 1-phosphate + hypoxanthine. It carries out the reaction thymidine + phosphate = 2-deoxy-alpha-D-ribose 1-phosphate + thymine. The enzyme catalyses uridine + phosphate = alpha-D-ribose 1-phosphate + uracil. The catalysed reaction is xanthosine + phosphate = alpha-D-ribose 1-phosphate + xanthine. In terms of biological role, catalyzes the phosphorolysis of diverse nucleosides, yielding D-ribose 1-phosphate and the respective free bases. Can use uridine, adenosine, guanosine, cytidine, thymidine, inosine and xanthosine as substrates. Also catalyzes the reverse reactions. The chain is Pyrimidine/purine nucleoside phosphorylase from Yersinia enterocolitica serotype O:8 / biotype 1B (strain NCTC 13174 / 8081).